The chain runs to 308 residues: Aspartate carbamoyltransferase catalytic subunit (308 aa).

Positions 55 and 56 each coordinate carbamoyl phosphate. L-aspartate is bound at residue Lys-83. Residues Arg-105, His-133, and Gln-136 each contribute to the carbamoyl phosphate site. Arg-166 and Arg-223 together coordinate L-aspartate. 2 residues coordinate carbamoyl phosphate: Gly-264 and Pro-265.

It belongs to the aspartate/ornithine carbamoyltransferase superfamily. ATCase family. In terms of assembly, heterododecamer (2C3:3R2) of six catalytic PyrB chains organized as two trimers (C3), and six regulatory PyrI chains organized as three dimers (R2).

The catalysed reaction is carbamoyl phosphate + L-aspartate = N-carbamoyl-L-aspartate + phosphate + H(+). Its pathway is pyrimidine metabolism; UMP biosynthesis via de novo pathway; (S)-dihydroorotate from bicarbonate: step 2/3. Catalyzes the condensation of carbamoyl phosphate and aspartate to form carbamoyl aspartate and inorganic phosphate, the committed step in the de novo pyrimidine nucleotide biosynthesis pathway. In Salinispora tropica (strain ATCC BAA-916 / DSM 44818 / JCM 13857 / NBRC 105044 / CNB-440), this protein is Aspartate carbamoyltransferase catalytic subunit.